The primary structure comprises 129 residues: Small ribosomal subunit protein uS11 (129 aa).

This sequence belongs to the universal ribosomal protein uS11 family. As to quaternary structure, part of the 30S ribosomal subunit. Interacts with proteins S7 and S18. Binds to IF-3.

Functionally, located on the platform of the 30S subunit, it bridges several disparate RNA helices of the 16S rRNA. Forms part of the Shine-Dalgarno cleft in the 70S ribosome. This chain is Small ribosomal subunit protein uS11, found in Thermosipho melanesiensis (strain DSM 12029 / CIP 104789 / BI429).